A 496-amino-acid polypeptide reads, in one-letter code: Cytochrome P450 monooxygenase claT (496 aa).

The helical transmembrane segment at 2 to 22 threads the bilayer; that stretch reads LSLIVEATLLLVVLVLSAHYV. C423 contributes to the heme binding site.

This sequence belongs to the cytochrome P450 family. Heme is required as a cofactor.

The protein localises to the membrane. It catalyses the reaction wigandol + 4 reduced [NADPH--hemoprotein reductase] + 4 O2 = arnebinol A + 4 oxidized [NADPH--hemoprotein reductase] + 6 H2O + 4 H(+). It carries out the reaction arnebinol A + reduced [NADPH--hemoprotein reductase] + O2 = clavilactone A + oxidized [NADPH--hemoprotein reductase] + H2O + H(+). The enzyme catalyses (2E)-geranylhydroquinone + reduced [NADPH--hemoprotein reductase] + O2 = isoalliodorol + oxidized [NADPH--hemoprotein reductase] + H2O + H(+). It functions in the pathway secondary metabolite biosynthesis; terpenoid biosynthesis. Its function is as follows. Cytochrome P450 monooxygenase; part of the gene cluster that mediates the biosynthesis of clavilactone A, a meroterpenoid that features a unique benzo-fused ten-membered carbocyclic ring unit with an alpha,beta-epoxy-gamma-lactone moiety, forming an intriguing 10/5/3 tricyclic nested skeleton. ClaR, ClaS and ClaT are sufficient to produce clavilactone A. Within the pathway, claT acts as a multifunctional cytochrome P450 monooxygenase that catalyzes a ten-electron oxidation to accomplish the biosynthesis of the 10/5/3 tricyclic nested skeleton in clavilactones. The biosynthesis begins with the prenyltransferase claS that transfers geranyl pyrophosphate (GPP) to hydroquinone to produces geranylhydroquinone. The cytochrome P450 monooxygenase claR then catalyzes the diradical coupling reaction between the intramolecular hydroquinone and allyl moieties to form the benzo-fused ten-membered carbocyclic ring unit of wigantol. Finally the cytochrome P450 monooxygenase claT exquisitely and stereoselectively assembles the alpha,beta-epoxy-gamma-lactone moiety, producing clavilactone A via arnebinol A. The sequence is that of Cytochrome P450 monooxygenase claT from Ampulloclitocybe clavipes (Club foot).